The sequence spans 689 residues: Glycine--tRNA ligase beta subunit (689 aa).

This sequence belongs to the class-II aminoacyl-tRNA synthetase family. Tetramer of two alpha and two beta subunits.

Its subcellular location is the cytoplasm. The catalysed reaction is tRNA(Gly) + glycine + ATP = glycyl-tRNA(Gly) + AMP + diphosphate. The sequence is that of Glycine--tRNA ligase beta subunit from Escherichia coli O7:K1 (strain IAI39 / ExPEC).